Here is a 360-residue protein sequence, read N- to C-terminus: Magnesium-protoporphyrin IX monomethyl ester [oxidative] cyclase (360 aa).

A disordered region spans residues 1–21; it reads MPPTAVTEATAVPGSNVTTKD.

It belongs to the AcsF family. Requires Fe cation as cofactor.

The catalysed reaction is Mg-protoporphyrin IX 13-monomethyl ester + 3 NADPH + 3 O2 + 2 H(+) = 3,8-divinyl protochlorophyllide a + 3 NADP(+) + 5 H2O. Its pathway is porphyrin-containing compound metabolism; chlorophyll biosynthesis (light-independent). Functionally, catalyzes the formation of the isocyclic ring in chlorophyll biosynthesis. Mediates the cyclase reaction, which results in the formation of divinylprotochlorophyllide (Pchlide) characteristic of all chlorophylls from magnesium-protoporphyrin IX 13-monomethyl ester (MgPMME). The sequence is that of Magnesium-protoporphyrin IX monomethyl ester [oxidative] cyclase from Synechococcus sp. (strain CC9311).